The following is a 393-amino-acid chain: Acetate kinase (393 aa).

Asparagine 6 contributes to the Mg(2+) binding site. ATP is bound at residue lysine 13. Arginine 87 contributes to the substrate binding site. Aspartate 143 acts as the Proton donor/acceptor in catalysis. ATP-binding positions include histidine 203–glycine 207, aspartate 278–arginine 280, and glycine 326–asparagine 330. Glutamate 380 serves as a coordination point for Mg(2+).

Belongs to the acetokinase family. As to quaternary structure, homodimer. Mg(2+) is required as a cofactor. It depends on Mn(2+) as a cofactor.

It localises to the cytoplasm. The catalysed reaction is acetate + ATP = acetyl phosphate + ADP. The protein operates within metabolic intermediate biosynthesis; acetyl-CoA biosynthesis; acetyl-CoA from acetate: step 1/2. Catalyzes the formation of acetyl phosphate from acetate and ATP. Can also catalyze the reverse reaction. This chain is Acetate kinase, found in Mycoplasma capricolum subsp. capricolum (strain California kid / ATCC 27343 / NCTC 10154).